The chain runs to 96 residues: Large ribosomal subunit protein uL23 (96 aa).

This sequence belongs to the universal ribosomal protein uL23 family. Part of the 50S ribosomal subunit. Contacts protein L29, and trigger factor when it is bound to the ribosome.

Its function is as follows. One of the early assembly proteins it binds 23S rRNA. One of the proteins that surrounds the polypeptide exit tunnel on the outside of the ribosome. Forms the main docking site for trigger factor binding to the ribosome. The chain is Large ribosomal subunit protein uL23 from Alkaliphilus oremlandii (strain OhILAs) (Clostridium oremlandii (strain OhILAs)).